The chain runs to 249 residues: tRNA pseudouridine synthase A (249 aa).

Residue Asp-53 is the Nucleophile of the active site. Residue Tyr-111 participates in substrate binding.

The protein belongs to the tRNA pseudouridine synthase TruA family. Homodimer.

It carries out the reaction uridine(38/39/40) in tRNA = pseudouridine(38/39/40) in tRNA. Formation of pseudouridine at positions 38, 39 and 40 in the anticodon stem and loop of transfer RNAs. This chain is tRNA pseudouridine synthase A, found in Streptococcus suis (strain 98HAH33).